A 216-amino-acid polypeptide reads, in one-letter code: GTP:AMP phosphotransferase, mitochondrial (216 aa).

GTP is bound at residue 15-20 (GSGKGT). The NMPbind stretch occupies residues 35-64 (STGDILRQNIIKNTELGKKAKQYIAEGKLV). Residues T36, R41, 62–64 (KLV), 89–92 (GFPR), and Q96 each bind AMP. An LID region spans residues 125-162 (NRWIHAPSGRVYNIGFKNPKVPGKDDVTGEPLMQREDD). GTP is bound by residues R126 and 135–136 (VY). The AMP site is built by R159 and R170. T199 contributes to the GTP binding site.

This sequence belongs to the adenylate kinase family. AK3 subfamily. Monomer. Ubiquitously expressed with highest levels expressed in the abdomen, suggesting a function in muscle tissues.

It localises to the mitochondrion matrix. It catalyses the reaction a ribonucleoside 5'-triphosphate + AMP = a ribonucleoside 5'-diphosphate + ADP. Its function is as follows. Involved in maintaining the homeostasis of cellular nucleotides by catalyzing the interconversion of nucleoside phosphates. Has GTP:AMP phosphotransferase and ITP:AMP phosphotransferase activities. This Drosophila melanogaster (Fruit fly) protein is GTP:AMP phosphotransferase, mitochondrial.